The chain runs to 389 residues: S-adenosylmethionine synthase (389 aa).

H17 provides a ligand contact to ATP. Position 19 (D19) interacts with Mg(2+). Residue E45 participates in K(+) binding. L-methionine is bound by residues E58 and Q101. Residues 101–111 form a flexible loop region; the sequence is QSPDISQGVTE. ATP contacts are provided by residues 168 to 170, 234 to 235, D243, 249 to 250, A266, and K270; these read DSK, RF, and RK. D243 contributes to the L-methionine binding site. K274 provides a ligand contact to L-methionine.

The protein belongs to the AdoMet synthase family. In terms of assembly, homotetramer; dimer of dimers. Mg(2+) serves as cofactor. Requires K(+) as cofactor.

Its subcellular location is the cytoplasm. It carries out the reaction L-methionine + ATP + H2O = S-adenosyl-L-methionine + phosphate + diphosphate. It functions in the pathway amino-acid biosynthesis; S-adenosyl-L-methionine biosynthesis; S-adenosyl-L-methionine from L-methionine: step 1/1. Catalyzes the formation of S-adenosylmethionine (AdoMet) from methionine and ATP. The overall synthetic reaction is composed of two sequential steps, AdoMet formation and the subsequent tripolyphosphate hydrolysis which occurs prior to release of AdoMet from the enzyme. The polypeptide is S-adenosylmethionine synthase (Geobacter sulfurreducens (strain ATCC 51573 / DSM 12127 / PCA)).